A 436-amino-acid chain; its full sequence is Tol-Pal system protein TolB (436 aa).

A signal peptide spans 1–28 (MRSFLKPLLTIAAMALGMTAVIPMPAWA).

This sequence belongs to the TolB family. As to quaternary structure, the Tol-Pal system is composed of five core proteins: the inner membrane proteins TolA, TolQ and TolR, the periplasmic protein TolB and the outer membrane protein Pal. They form a network linking the inner and outer membranes and the peptidoglycan layer.

The protein localises to the periplasm. Part of the Tol-Pal system, which plays a role in outer membrane invagination during cell division and is important for maintaining outer membrane integrity. This Mesorhizobium japonicum (strain LMG 29417 / CECT 9101 / MAFF 303099) (Mesorhizobium loti (strain MAFF 303099)) protein is Tol-Pal system protein TolB.